Here is a 665-residue protein sequence, read N- to C-terminus: Cysteine-rich receptor-like protein kinase 41 (665 aa).

Residues 1–27 (MTSSCSLSRPQHLFFFFFLFVPFLSLG) form the signal peptide. The Extracellular portion of the chain corresponds to 28-280 (QQISVDINSA…DPKPGNDKVK (253 aa)). Gnk2-homologous domains follow at residues 42–148 (PSNP…DKPI) and 154–260 (TSPV…SDLR). N-linked (GlcNAc...) asparagine glycosylation is found at Asn120, Asn165, and Asn236. A helical membrane pass occupies residues 281-301 (IIIATVCSVIGFAIIAVFLYF). Residues 302-665 (FMTRNRRTAK…DVTITEFDAR (364 aa)) are Cytoplasmic-facing. The 281-residue stretch at 344–624 (FSRDNQLGEG…VVMLNANSFT (281 aa)) folds into the Protein kinase domain. Residues 350 to 358 (LGEGGFGAV) and Lys372 contribute to the ATP site. Position 417 is a phosphotyrosine (Tyr417). Catalysis depends on Asp469, which acts as the Proton acceptor. At Ser473 the chain carries Phosphoserine. At Thr511 the chain carries Phosphothreonine. Tyr519 carries the phosphotyrosine modification.

The protein belongs to the protein kinase superfamily. Ser/Thr protein kinase family. CRK subfamily.

The protein resides in the membrane. The enzyme catalyses L-seryl-[protein] + ATP = O-phospho-L-seryl-[protein] + ADP + H(+). It catalyses the reaction L-threonyl-[protein] + ATP = O-phospho-L-threonyl-[protein] + ADP + H(+). This chain is Cysteine-rich receptor-like protein kinase 41 (CRK41), found in Arabidopsis thaliana (Mouse-ear cress).